A 225-amino-acid polypeptide reads, in one-letter code: Ribonuclease 3 (225 aa).

The 127-residue stretch at 2 to 128 (LSTLIKKLKI…LFGAIYLDLG (127 aa)) folds into the RNase III domain. Mg(2+) is bound at residue E43. D47 is a catalytic residue. The Mg(2+) site is built by N114 and E117. E117 is an active-site residue. In terms of domain architecture, DRBM spans 152 to 220 (DFKTQLQELV…ARYVLNILSK (69 aa)).

The protein belongs to the ribonuclease III family. Homodimer. Mg(2+) serves as cofactor.

The protein localises to the cytoplasm. The catalysed reaction is Endonucleolytic cleavage to 5'-phosphomonoester.. In terms of biological role, digests double-stranded RNA. Involved in the processing of primary rRNA transcript to yield the immediate precursors to the large and small rRNAs (23S and 16S). Processes some mRNAs, and tRNAs when they are encoded in the rRNA operon. Processes pre-crRNA and tracrRNA of type II CRISPR loci if present in the organism. The sequence is that of Ribonuclease 3 from Phytoplasma mali (strain AT).